Here is a 176-residue protein sequence, read N- to C-terminus: Protein Dr1 (176 aa).

An N-acetylalanine modification is found at alanine 2. A Histone-fold domain is found at 12–75 (TIPRAAINKM…ISPEHVIQAL (64 aa)). A Nuclear localization signal motif is present at residues 100-103 (KRRK). Residues serine 105, serine 106, serine 166, and serine 167 each carry the phosphoserine modification. The segment covering 152–167 (QLAAASASASNQAGSS) has biased composition (low complexity). The tract at residues 152–176 (QLAAASASASNQAGSSQDEEDDDDI) is disordered.

It belongs to the NC2 beta/DR1 family. Heterodimer with DRAP1. DR1 exists in solution as a homotetramer that dissociates during interaction with TBP and then, after complexing with TBP, reassociates at a slow rate, to reconstitute the tetramer. Interacts with NFIL3. Component of the ADA2A-containing complex (ATAC), composed of KAT14, KAT2A, TADA2L, TADA3L, ZZ3, MBIP, WDR5, YEATS2, CCDC101 and DR1. In terms of processing, phosphorylation regulates its interaction with TBP. Not phosphorylated when bound to DRAP1.

It localises to the nucleus. The association of the DR1/DRAP1 heterodimer with TBP results in a functional repression of both activated and basal transcription of class II genes. This interaction precludes the formation of a transcription-competent complex by inhibiting the association of TFIIA and/or TFIIB with TBP. Can bind to DNA on its own. Component of the ATAC complex, a complex with histone acetyltransferase activity on histones H3 and H4. This chain is Protein Dr1 (DR1), found in Homo sapiens (Human).